Here is a 367-residue protein sequence, read N- to C-terminus: Anhydro-N-acetylmuramic acid kinase (367 aa).

Position 11–18 (11–18 (GTSLDGVD)) interacts with ATP.

This sequence belongs to the anhydro-N-acetylmuramic acid kinase family.

It carries out the reaction 1,6-anhydro-N-acetyl-beta-muramate + ATP + H2O = N-acetyl-D-muramate 6-phosphate + ADP + H(+). Its pathway is amino-sugar metabolism; 1,6-anhydro-N-acetylmuramate degradation. The protein operates within cell wall biogenesis; peptidoglycan recycling. In terms of biological role, catalyzes the specific phosphorylation of 1,6-anhydro-N-acetylmuramic acid (anhMurNAc) with the simultaneous cleavage of the 1,6-anhydro ring, generating MurNAc-6-P. Is required for the utilization of anhMurNAc either imported from the medium or derived from its own cell wall murein, and thus plays a role in cell wall recycling. In Chromobacterium violaceum (strain ATCC 12472 / DSM 30191 / JCM 1249 / CCUG 213 / NBRC 12614 / NCIMB 9131 / NCTC 9757 / MK), this protein is Anhydro-N-acetylmuramic acid kinase.